The primary structure comprises 664 residues: Transketolase 1 (664 aa).

A substrate-binding site is contributed by histidine 26. Thiamine diphosphate contacts are provided by residues histidine 66 and 114–116; that span reads GPL. Residue aspartate 155 participates in Mg(2+) binding. Positions 156 and 185 each coordinate thiamine diphosphate. Mg(2+)-binding residues include asparagine 185 and isoleucine 187. Substrate is bound by residues histidine 260, arginine 357, and serine 384. Histidine 260 provides a ligand contact to thiamine diphosphate. The active-site Proton donor is glutamate 411. Phenylalanine 437 lines the thiamine diphosphate pocket. Substrate contacts are provided by histidine 461, aspartate 469, and arginine 520.

Belongs to the transketolase family. In terms of assembly, homodimer. It depends on Mg(2+) as a cofactor. The cofactor is Ca(2+). Mn(2+) is required as a cofactor. Requires Co(2+) as cofactor. Thiamine diphosphate serves as cofactor.

It carries out the reaction D-sedoheptulose 7-phosphate + D-glyceraldehyde 3-phosphate = aldehydo-D-ribose 5-phosphate + D-xylulose 5-phosphate. Functionally, catalyzes the transfer of a two-carbon ketol group from a ketose donor to an aldose acceptor, via a covalent intermediate with the cofactor thiamine pyrophosphate. The protein is Transketolase 1 (tkt1) of Aliivibrio fischeri (strain ATCC 700601 / ES114) (Vibrio fischeri).